Consider the following 317-residue polypeptide: Methyltransferase CPUR_05424 (317 aa).

A methyltransferase domain region spans residues 57 to 149; the sequence is DVGAGNGPYA…QLRPGGTFAC (93 aa).

It belongs to the methyltransferase superfamily.

It functions in the pathway pigment biosynthesis. Functionally, methyltransferase; part of the ergochrome gene cluster responsible for the typical purple-black color of the ergot sclerotia. The ergochrome gene cluster produces several ergot pigments including the yellow ergochrome secalonic acid and its derivatives, as well as the red anthraquinones endocrocin and clavorubin. The pathway begins with the synthesis of atrochrysone thioester by the polyketide synthase (PKS) CPUR_05437. The atrochrysone carboxyl ACP thioesterase CPUR_05436 then breaks the thioester bond and releases the atrochrysone carboxylic acid from CPUR_05437. The atrochrysone carboxylic acid is then converted to atrochrysone which is further transformed into emodin anthrone. The next step is performed by the anthrone oxygenase CPUR_05434 that catalyzes the oxidation of emodinanthrone to emodin. Emodin is further modified to yield monodictyphenone via several steps involving CPUR_05427, CPUR_05428, CPUR_05429 and CPUR_05430. The short chain dehydrogenase/reductase CPUR_05418 then catalyzes the C-5 ketoreduction to give the xanthone skeleton of the monomeric units. Ergochromes formation requires further dimerization steps of different xanthone units, probably catalyzed by the cytochrome P450 monooxygenase CPUR_05419. CPUR_05425, CPUR_05426 and CPUR_05431 are unique to Claviceps, thus it is likely that they are involved in further modification of xanthone units or in their dimerization. The yellow ergochromes and the red anthraquinone pigments endocrocin and clavorubin are products from the same PKS derived precursors and the latter are likely shunt products in the pathway of xanthone biosynthesis. It is proposed that atrochrysone carboxylic acid released from the PKS CPUR_05437 can also be converted to endocrocin anthrone which is further oxidized into endocrocin by CPUR_05435. Endocrocin could be then modified to clavorubin, possibly by CPUR_05423 and CPUR_05431. Clavorubin is the principal anthraquinone metabolite produced by the cluster with a much higher yield compared to endocrocin. The chain is Methyltransferase CPUR_05424 from Claviceps purpurea (strain 20.1) (Ergot fungus).